The sequence spans 263 residues: Hydroxyethylthiazole kinase 1 (263 aa).

Position 42 (Met-42) interacts with substrate. Lys-118 and Thr-164 together coordinate ATP. Gly-191 is a binding site for substrate.

Belongs to the Thz kinase family. Mg(2+) is required as a cofactor.

It carries out the reaction 5-(2-hydroxyethyl)-4-methylthiazole + ATP = 4-methyl-5-(2-phosphooxyethyl)-thiazole + ADP + H(+). It functions in the pathway cofactor biosynthesis; thiamine diphosphate biosynthesis; 4-methyl-5-(2-phosphoethyl)-thiazole from 5-(2-hydroxyethyl)-4-methylthiazole: step 1/1. In terms of biological role, catalyzes the phosphorylation of the hydroxyl group of 4-methyl-5-beta-hydroxyethylthiazole (THZ). This is Hydroxyethylthiazole kinase 1 from Clostridium botulinum (strain Langeland / NCTC 10281 / Type F).